We begin with the raw amino-acid sequence, 418 residues long: ATP phosphoribosyltransferase regulatory subunit (418 aa).

Belongs to the class-II aminoacyl-tRNA synthetase family. HisZ subfamily. In terms of assembly, heteromultimer composed of HisG and HisZ subunits.

The protein localises to the cytoplasm. It participates in amino-acid biosynthesis; L-histidine biosynthesis; L-histidine from 5-phospho-alpha-D-ribose 1-diphosphate: step 1/9. Required for the first step of histidine biosynthesis. May allow the feedback regulation of ATP phosphoribosyltransferase activity by histidine. In Acetivibrio thermocellus (strain ATCC 27405 / DSM 1237 / JCM 9322 / NBRC 103400 / NCIMB 10682 / NRRL B-4536 / VPI 7372) (Clostridium thermocellum), this protein is ATP phosphoribosyltransferase regulatory subunit.